We begin with the raw amino-acid sequence, 240 residues long: Ribosomal RNA large subunit methyltransferase E (240 aa).

The segment covering 1-20 (MSKAGGNKGGVKTGGRGGAG) has biased composition (gly residues). The tract at residues 1 to 27 (MSKAGGNKGGVKTGGRGGAGSSNLQVR) is disordered. Positions 92, 94, 115, 131, and 155 each coordinate S-adenosyl-L-methionine. K195 (proton acceptor) is an active-site residue.

It belongs to the class I-like SAM-binding methyltransferase superfamily. RNA methyltransferase RlmE family.

It localises to the cytoplasm. It carries out the reaction uridine(2552) in 23S rRNA + S-adenosyl-L-methionine = 2'-O-methyluridine(2552) in 23S rRNA + S-adenosyl-L-homocysteine + H(+). In terms of biological role, specifically methylates the uridine in position 2552 of 23S rRNA at the 2'-O position of the ribose in the fully assembled 50S ribosomal subunit. In Brucella anthropi (strain ATCC 49188 / DSM 6882 / CCUG 24695 / JCM 21032 / LMG 3331 / NBRC 15819 / NCTC 12168 / Alc 37) (Ochrobactrum anthropi), this protein is Ribosomal RNA large subunit methyltransferase E.